A 56-amino-acid chain; its full sequence is Attractin (56 aa).

Cystine bridges form between C4–C41, C13–C33, and C20–C26. N-linked (GlcNAc...) asparagine glycosylation occurs at N25.

Produced by the albumen gland of the egg cordons.

Its subcellular location is the secreted. In terms of biological role, water-borne pheromone that attract the marine mollusk Aplysia into breeding aggregations and coordinate male and female reproductive behavior within the aggregation. The polypeptide is Attractin (ATT) (Aplysia depilans (Sea hare)).